Here is a 178-residue protein sequence, read N- to C-terminus: Crossover junction endodeoxyribonuclease RuvC (178 aa).

Catalysis depends on residues aspartate 11, glutamate 71, and aspartate 143. Positions 11, 71, and 143 each coordinate Mg(2+).

This sequence belongs to the RuvC family. Homodimer which binds Holliday junction (HJ) DNA. The HJ becomes 2-fold symmetrical on binding to RuvC with unstacked arms; it has a different conformation from HJ DNA in complex with RuvA. In the full resolvosome a probable DNA-RuvA(4)-RuvB(12)-RuvC(2) complex forms which resolves the HJ. It depends on Mg(2+) as a cofactor.

Its subcellular location is the cytoplasm. The catalysed reaction is Endonucleolytic cleavage at a junction such as a reciprocal single-stranded crossover between two homologous DNA duplexes (Holliday junction).. Its function is as follows. The RuvA-RuvB-RuvC complex processes Holliday junction (HJ) DNA during genetic recombination and DNA repair. Endonuclease that resolves HJ intermediates. Cleaves cruciform DNA by making single-stranded nicks across the HJ at symmetrical positions within the homologous arms, yielding a 5'-phosphate and a 3'-hydroxyl group; requires a central core of homology in the junction. The consensus cleavage sequence is 5'-(A/T)TT(C/G)-3'. Cleavage occurs on the 3'-side of the TT dinucleotide at the point of strand exchange. HJ branch migration catalyzed by RuvA-RuvB allows RuvC to scan DNA until it finds its consensus sequence, where it cleaves and resolves the cruciform DNA. This is Crossover junction endodeoxyribonuclease RuvC from Neisseria meningitidis serogroup C / serotype 2a (strain ATCC 700532 / DSM 15464 / FAM18).